The chain runs to 372 residues: NAD(P)H-quinone oxidoreductase subunit 1 (372 aa).

A run of 8 helical transmembrane segments spans residues isoleucine 28–valine 48, tryptophan 97–valine 117, valine 130–glycine 150, leucine 176–valine 196, isoleucine 204–leucine 224, leucine 265–proline 285, serine 308–leucine 328, and valine 351–glycine 371.

This sequence belongs to the complex I subunit 1 family. As to quaternary structure, NDH-1 is composed of at least 11 different subunits.

The protein resides in the cellular thylakoid membrane. The enzyme catalyses a plastoquinone + NADH + (n+1) H(+)(in) = a plastoquinol + NAD(+) + n H(+)(out). It catalyses the reaction a plastoquinone + NADPH + (n+1) H(+)(in) = a plastoquinol + NADP(+) + n H(+)(out). Its function is as follows. NDH-1 shuttles electrons from an unknown electron donor, via FMN and iron-sulfur (Fe-S) centers, to quinones in the respiratory and/or the photosynthetic chain. The immediate electron acceptor for the enzyme in this species is believed to be plastoquinone. Couples the redox reaction to proton translocation, and thus conserves the redox energy in a proton gradient. The sequence is that of NAD(P)H-quinone oxidoreductase subunit 1 from Picosynechococcus sp. (strain ATCC 27264 / PCC 7002 / PR-6) (Agmenellum quadruplicatum).